The primary structure comprises 641 residues: Chaperone protein DnaK (641 aa).

Position 199 is a phosphothreonine; by autocatalysis (Thr199). The interval 603–627 is disordered; sequence YGQQQAEGGAQAAGAAGGSSKADDA. Positions 604–616 are enriched in low complexity; that stretch reads GQQQAEGGAQAAG.

It belongs to the heat shock protein 70 family.

Acts as a chaperone. This is Chaperone protein DnaK from Azoarcus sp. (strain BH72).